The primary structure comprises 150 residues: FAD synthase (150 aa).

ATP-binding positions include A8–F9, H13–H16, D95, and H122.

It belongs to the archaeal FAD synthase family. In terms of assembly, homodimer. It depends on a divalent metal cation as a cofactor.

It carries out the reaction FMN + ATP + H(+) = FAD + diphosphate. It participates in cofactor biosynthesis; FAD biosynthesis; FAD from FMN: step 1/1. Catalyzes the transfer of the AMP portion of ATP to flavin mononucleotide (FMN) to produce flavin adenine dinucleotide (FAD) coenzyme. The chain is FAD synthase from Methanobrevibacter ruminantium (strain ATCC 35063 / DSM 1093 / JCM 13430 / OCM 146 / M1) (Methanobacterium ruminantium).